Consider the following 253-residue polypeptide: UPF0246 protein LBA1843 (253 aa).

This sequence belongs to the UPF0246 family.

This chain is UPF0246 protein LBA1843, found in Lactobacillus acidophilus (strain ATCC 700396 / NCK56 / N2 / NCFM).